The primary structure comprises 322 residues: MSARDGNTASEWVPTGSVTVRVPGKVNLYLDVGDRRQDGYHELTTVFHAVSLLDEVTVRTADTLSLEHVGEGADSLPTDERNLAWRAAELMAEHVGRAPDVAISIEKTIPVAGGMAGGSADAAAVLVAMNSLWELGVPRRDLHALAAQLGSDVPFALHGGTALGTGRGEELATVLTRNTFHWVLAFSPGGLSTAKVFAEIDRLRAEEDRTLPPRLESPEPVLAALASGDPAQLAPLLGNDLQPAALSLDPALRRTLRAGLDAGALAGLVSGSGPTCAFLCTSAGAAVDIGTDLAGAGVCRTVRVASGPVQGARVVPAPSTAG.

The active site involves lysine 25. 110 to 120 provides a ligand contact to ATP; that stretch reads PVAGGMAGGSA. The active site involves aspartate 152.

This sequence belongs to the GHMP kinase family. IspE subfamily.

It catalyses the reaction 4-CDP-2-C-methyl-D-erythritol + ATP = 4-CDP-2-C-methyl-D-erythritol 2-phosphate + ADP + H(+). It functions in the pathway isoprenoid biosynthesis; isopentenyl diphosphate biosynthesis via DXP pathway; isopentenyl diphosphate from 1-deoxy-D-xylulose 5-phosphate: step 3/6. In terms of biological role, catalyzes the phosphorylation of the position 2 hydroxy group of 4-diphosphocytidyl-2C-methyl-D-erythritol. The chain is 4-diphosphocytidyl-2-C-methyl-D-erythritol kinase from Mycolicibacterium gilvum (strain PYR-GCK) (Mycobacterium gilvum (strain PYR-GCK)).